The primary structure comprises 309 residues: Tagatose-6-phosphate kinase (309 aa).

This sequence belongs to the carbohydrate kinase PfkB family. LacC subfamily.

The catalysed reaction is D-tagatofuranose 6-phosphate + ATP = D-tagatofuranose 1,6-bisphosphate + ADP + H(+). It functions in the pathway carbohydrate metabolism; D-tagatose 6-phosphate degradation; D-glyceraldehyde 3-phosphate and glycerone phosphate from D-tagatose 6-phosphate: step 1/2. The chain is Tagatose-6-phosphate kinase from Streptococcus pyogenes serotype M5 (strain Manfredo).